A 256-amino-acid polypeptide reads, in one-letter code: MLEGKVAVVTGGGQGIGAAIAQLFAENGMKVVIAEIDEEAGVEREEMLRERGLDVTFVKTDVADENSVKNMVRKTVEIYGGVDVLVNNAAVMSVKSIFERPLEEWERVIRVNLTGPYICSRYCAEEMIKRGGGVIINIASTRAFQSEPDTEPYSASKGGLVALTHSLAVSLSRYHIRVVSISPGWIETSEWKKKSLRKKPDLRPIDHEQHPAGRVGNPLDIAHLCVFLADDEKAGFITGTNFIVDGGMTVKMIYEE.

9 to 33 contributes to the NADP(+) binding site; the sequence is VTGGGQGIGAAIAQLFAENGMKVVI. S140 serves as a coordination point for substrate. Y153 functions as the Proton acceptor in the catalytic mechanism.

It belongs to the short-chain dehydrogenases/reductases (SDR) family.

This is an uncharacterized protein from Thermotoga maritima (strain ATCC 43589 / DSM 3109 / JCM 10099 / NBRC 100826 / MSB8).